A 244-amino-acid chain; its full sequence is uncharacterized protein (244 aa).

One can recognise an HTH gntR-type domain in the interval 7-74; it reads VKEKDQVVAH…YHRGAFIERF (68 aa). Residues 34 to 53 constitute a DNA-binding region (H-T-H motif); the sequence is RNEIAHGLGVSRVPIQEALV.

This is an uncharacterized protein from Mycobacterium tuberculosis (strain CDC 1551 / Oshkosh).